The sequence spans 1162 residues: MAAARNATPTPQNGRDASRLSFAKITDTLTVPDLLALQTESFDWLVGSDAWKRRVEEGTAQGRTDLALNSGLEEIFEEISPIEDLGETMQLGFTNPYLEEQKYSIDECKERGKTYSAPLYVEAEFMNHLTGEIKTQTVFMGDFPLMTEKGTFIINGTERVVVSQLVRSPGVYFERQQEKTSDKDIYSARVIPSRGAWLEFEIDKRDQVGVRIDRKRKQSVTVFLKALGLTSEQILEEFKGVASIELTLEKDSILTKEEALKDIYRKLRPGEQVAAEAARALLDNFYFNPKRYDLAKVGRYKINRKLGIDKQLTDSVLTVEDILATIKYLVSLHANETKMNGTRDGKPVELRLDVDDIDHFGNRRIRAVGELIQNQVRTGLSRMERVVRERMTTQDIEAITPQTLINVRPVVAAIKEFFGTSQLSQFMDQNNPLAGLTHKRRLSALGPGGLSRERAGVEVRDVHPSHYGRMCPIETPEGPNIGLIGSLASFARINSFGFIETPYRRVVDGVVTDTIDYLTASEEDEFLVAQANAPLTKDFRFAEDRVLVRPKGGEVELVAKENVHYMDVSPRQMVSVATSLIPFLEHDDANRALMGANMQRQAVPLLRSESPLVGTGMEGYAAIDAGDVLTADASGVVQEVSAEVVTIQLDEGGTQTYYLRKFDRSNQGTSYNHRVLVSAGDRIEAGEVIADGPATENGELALGKNLLVAFMPWEGHNFEDAIILSQNLVKDDTLSSIHIEEYEVDARDTKLGKEEITRDLPNVSPELLADLDERGIIRIGAEVRPGDILVGKVTPKGETELSAEERLLRAIFNEKSREVRDTSLKVPHGEQGTIIGVKVFDSQDGDDELGSGVNQRVVVFIAQKRKITEGDKLAGRHGNKGVISKILPVEDMPFLADGTPVDVILNPLGIPGRMNFGQVLETHLGWIAKQGWEVEGKPKWAERLPDHARQAPAGTKVATPVFDGALEEEIAGLLDSTTVTRDGDRLIGSSGKTRLFDGRSGEPFPEPVSVGYMYILKLHHLVDDKIHARSTGPYSMITQQPLGGKAQFGGQRFGEMEVWALEAYGAAYALQELLTIKSDDILGRVKVYEAIVKGENIQEPGIPESFKVLIKEMQSLCLNVEVLSADGQAVSLRDTDDEVFRAAEELGINISTRFESSSIDDI.

This sequence belongs to the RNA polymerase beta chain family. The RNAP catalytic core consists of 2 alpha, 1 beta, 1 beta' and 1 omega subunit. When a sigma factor is associated with the core the holoenzyme is formed, which can initiate transcription.

The enzyme catalyses RNA(n) + a ribonucleoside 5'-triphosphate = RNA(n+1) + diphosphate. DNA-dependent RNA polymerase catalyzes the transcription of DNA into RNA using the four ribonucleoside triphosphates as substrates. The sequence is that of DNA-directed RNA polymerase subunit beta from Clavibacter michiganensis subsp. michiganensis (strain NCPPB 382).